A 426-amino-acid chain; its full sequence is Gamma-glutamyl phosphate reductase (426 aa).

This sequence belongs to the gamma-glutamyl phosphate reductase family.

The protein resides in the cytoplasm. It carries out the reaction L-glutamate 5-semialdehyde + phosphate + NADP(+) = L-glutamyl 5-phosphate + NADPH + H(+). The protein operates within amino-acid biosynthesis; L-proline biosynthesis; L-glutamate 5-semialdehyde from L-glutamate: step 2/2. Catalyzes the NADPH-dependent reduction of L-glutamate 5-phosphate into L-glutamate 5-semialdehyde and phosphate. The product spontaneously undergoes cyclization to form 1-pyrroline-5-carboxylate. In Paracidovorax citrulli (strain AAC00-1) (Acidovorax citrulli), this protein is Gamma-glutamyl phosphate reductase.